The following is a 124-amino-acid chain: Holo-[acyl-carrier-protein] synthase (124 aa).

Mg(2+)-binding residues include aspartate 8 and glutamate 55.

The protein belongs to the P-Pant transferase superfamily. AcpS family. Requires Mg(2+) as cofactor.

The protein resides in the cytoplasm. It carries out the reaction apo-[ACP] + CoA = holo-[ACP] + adenosine 3',5'-bisphosphate + H(+). Transfers the 4'-phosphopantetheine moiety from coenzyme A to a Ser of acyl-carrier-protein. In Desulfovibrio desulfuricans (strain ATCC 27774 / DSM 6949 / MB), this protein is Holo-[acyl-carrier-protein] synthase.